The chain runs to 270 residues: Formamidopyrimidine-DNA glycosylase (270 aa).

The Schiff-base intermediate with DNA role is filled by Pro2. Catalysis depends on Glu3, which acts as the Proton donor. Catalysis depends on Lys58, which acts as the Proton donor; for beta-elimination activity. Residues His91, Arg110, and Arg151 each contribute to the DNA site. Residues 236 to 270 form an FPG-type zinc finger; it reads FVYGRGGEFCKSCGSTLREIRLGQRASVYCSRCQR. Arg260 (proton donor; for delta-elimination activity) is an active-site residue.

Belongs to the FPG family. In terms of assembly, monomer. Zn(2+) serves as cofactor.

The catalysed reaction is Hydrolysis of DNA containing ring-opened 7-methylguanine residues, releasing 2,6-diamino-4-hydroxy-5-(N-methyl)formamidopyrimidine.. The enzyme catalyses 2'-deoxyribonucleotide-(2'-deoxyribose 5'-phosphate)-2'-deoxyribonucleotide-DNA = a 3'-end 2'-deoxyribonucleotide-(2,3-dehydro-2,3-deoxyribose 5'-phosphate)-DNA + a 5'-end 5'-phospho-2'-deoxyribonucleoside-DNA + H(+). Functionally, involved in base excision repair of DNA damaged by oxidation or by mutagenic agents. Acts as a DNA glycosylase that recognizes and removes damaged bases. Has a preference for oxidized purines, such as 7,8-dihydro-8-oxoguanine (8-oxoG). Has AP (apurinic/apyrimidinic) lyase activity and introduces nicks in the DNA strand. Cleaves the DNA backbone by beta-delta elimination to generate a single-strand break at the site of the removed base with both 3'- and 5'-phosphates. This Stutzerimonas stutzeri (strain A1501) (Pseudomonas stutzeri) protein is Formamidopyrimidine-DNA glycosylase.